The following is a 180-amino-acid chain: Small ribosomal subunit protein bS16 (180 aa).

This sequence belongs to the bacterial ribosomal protein bS16 family.

The chain is Small ribosomal subunit protein bS16 from Flavobacterium psychrophilum (strain ATCC 49511 / DSM 21280 / CIP 103535 / JIP02/86).